Consider the following 283-residue polypeptide: MKAKVIDGSRASARIREQLKERVACLRARNIRPGLAVLLVGEDPASQVYVRNKVAACEQVGIHSVTERYPSAWTENQLLDRIASLHGDPAINGILVQLPLPPHMSAHRVIEAISPLKDVDGFHISNAGLLMTGKPQFQPCTPYGVMKLLESEGVSLRGAEAVIVGASNIVGKPMAMLLLAAGATVTICNSKTRDLAGQARRADVLIVAAGRAGIVDGSMIKPGAVVIDVGINRSPDGRLCGDVDYGSAAKVAGAITPVPGGVGPMTIAMLLANTVEAAERSAI.

Residues 165–167, serine 190, and isoleucine 231 each bind NADP(+); that span reads GAS.

Belongs to the tetrahydrofolate dehydrogenase/cyclohydrolase family. In terms of assembly, homodimer.

It catalyses the reaction (6R)-5,10-methylene-5,6,7,8-tetrahydrofolate + NADP(+) = (6R)-5,10-methenyltetrahydrofolate + NADPH. The enzyme catalyses (6R)-5,10-methenyltetrahydrofolate + H2O = (6R)-10-formyltetrahydrofolate + H(+). It functions in the pathway one-carbon metabolism; tetrahydrofolate interconversion. Functionally, catalyzes the oxidation of 5,10-methylenetetrahydrofolate to 5,10-methenyltetrahydrofolate and then the hydrolysis of 5,10-methenyltetrahydrofolate to 10-formyltetrahydrofolate. The chain is Bifunctional protein FolD 2 from Bordetella pertussis (strain Tohama I / ATCC BAA-589 / NCTC 13251).